Here is a 196-residue protein sequence, read N- to C-terminus: Golgi to ER traffic protein 1 (196 aa).

Residues 1 to 10 (MFLDLHPYTI) lie on the Lumenal side of the membrane. The chain crosses the membrane as a helical span at residues 11–30 (LVSIFIILLVKQIVGRIGKS). The Cytoplasmic portion of the chain corresponds to 31–114 (TIQEFVWLLY…SIDKLANVLL (84 aa)). A coiled-coil region spans residues 76-114 (AKWTKLNRQADKLTSEIQKLNEEIRQSKASIDKLANVLL). Residues 115-135 (MVLTTLPIWVARIFFRKTHLF) traverse the membrane as a helical segment. Over 136-159 (YLRSGIFPRYIEWVLALPFFPSGA) the chain is Lumenal. The helical transmembrane segment at 160–176 (VGLTVWMFAANSVIHNV) threads the bilayer. Topologically, residues 177 to 196 (ISLVSFAFEKRVEKPVRQKK) are cytoplasmic.

This sequence belongs to the WRB/GET1 family. Component of the Golgi to ER traffic (GET) complex, which is composed of GET1, GET2 and GET3. Within the complex, GET1 and GET2 form a heterotetramer which is stabilized by phosphatidylinositol binding and which binds to the GET3 homodimer.

The protein localises to the endoplasmic reticulum membrane. Its subcellular location is the golgi apparatus membrane. Required for the post-translational delivery of tail-anchored (TA) proteins to the endoplasmic reticulum. Together with GET2, acts as a membrane receptor for soluble GET3, which recognizes and selectively binds the transmembrane domain of TA proteins in the cytosol. The GET complex cooperates with the HDEL receptor ERD2 to mediate the ATP-dependent retrieval of resident ER proteins that contain a C-terminal H-D-E-L retention signal from the Golgi to the ER. The chain is Golgi to ER traffic protein 1 from Candida tropicalis (strain ATCC MYA-3404 / T1) (Yeast).